The primary structure comprises 266 residues: Respiratory nitrate reductase beta chain (266 aa).

2 consecutive 4Fe-4S ferredoxin-type domains span residues Val3 to Asn32 and Trp30 to Glu61. Cys12, Cys15, Cys18, Cys22, Cys39, Cys42, and Cys47 together coordinate [4Fe-4S] cluster. The [3Fe-4S] cluster site is built by Cys51 and Cys73. Residues Cys77, Cys81, Cys84, Cys96, and Cys100 each contribute to the [4Fe-4S] cluster site.

As to quaternary structure, heterotrimer composed of an alpha, a beta and a gamma chain. Alpha and beta are catalytic chains; gamma chains are involved in binding the enzyme complex to the cytoplasmic membrane. The cofactor is [4Fe-4S] cluster. It depends on [3Fe-4S] cluster as a cofactor.

It is found in the cell membrane. It localises to the cytoplasm. The enzyme catalyses nitrate + a quinol = a quinone + nitrite + H2O. Inhibited by micromolar concentrations of azide. The nitrate reductase enzyme complex allows Bradyrhizobium sp. USDA 3045 to use nitrate as an electron acceptor during anaerobic growth. The beta chain is an electron transfer unit containing four cysteine clusters involved in the formation of iron-sulfur centers. Electrons are transferred from the gamma chain to the molybdenum cofactor of the alpha subunit. The sequence is that of Respiratory nitrate reductase beta chain (narH) from Bradyrhizobium sp.